Consider the following 142-residue polypeptide: Large ribosomal subunit protein uL11 (142 aa).

This sequence belongs to the universal ribosomal protein uL11 family. Part of the ribosomal stalk of the 50S ribosomal subunit. Interacts with L10 and the large rRNA to form the base of the stalk. L10 forms an elongated spine to which L12 dimers bind in a sequential fashion forming a multimeric L10(L12)X complex. One or more lysine residues are methylated.

Its function is as follows. Forms part of the ribosomal stalk which helps the ribosome interact with GTP-bound translation factors. The polypeptide is Large ribosomal subunit protein uL11 (Nitrobacter winogradskyi (strain ATCC 25391 / DSM 10237 / CIP 104748 / NCIMB 11846 / Nb-255)).